The chain runs to 392 residues: 5-azacytidine-induced protein 2 (392 aa).

A homodimerization region spans residues 1 to 197 (MDALVEDDIC…IELQKAKQTD (197 aa)). Coiled coils occupy residues 40 to 76 (ALVT…LIAR) and 102 to 196 (DRDN…AKQT). The tract at residues 216-257 (SDNMQHAYWELKREMSNLHLVTQVQAELLRKLKTSTAIKKAC) is interaction with TBK1 and IKBKE. A phosphoserine mark is found at serine 318 and serine 353.

As to quaternary structure, homodimer. Interacts with IKBKE. Interacts with TBK1. Interacts with TICAM1. Interacts with TAX1BP1. Interacts with CALCOCO2. In terms of assembly, (Microbial infection) Interacts with vaccinia virus protein C6. In terms of processing, ubiquitinated via 'Lys-48'-linked polyubiquitination by TRIM38, leading to its degradation. In terms of tissue distribution, widely expressed. Abundant expression seen in the pancreas and testis.

The protein localises to the cytoplasm. Functionally, adapter protein which binds TBK1 and IKBKE playing a role in antiviral innate immunity. Activates serine/threonine-protein kinase TBK1 and facilitates its oligomerization. Enhances the phosphorylation of NF-kappa-B p65 subunit RELA by TBK1. Promotes TBK1-induced as well as TNF-alpha or PMA-induced activation of NF-kappa-B. Participates in IFNB promoter activation via TICAM1. The sequence is that of 5-azacytidine-induced protein 2 (AZI2) from Homo sapiens (Human).